We begin with the raw amino-acid sequence, 338 residues long: Phenylalanine--tRNA ligase alpha subunit (338 aa).

Glu253 is a binding site for Mg(2+).

This sequence belongs to the class-II aminoacyl-tRNA synthetase family. Phe-tRNA synthetase alpha subunit type 1 subfamily. As to quaternary structure, tetramer of two alpha and two beta subunits. Mg(2+) is required as a cofactor.

The protein localises to the cytoplasm. It carries out the reaction tRNA(Phe) + L-phenylalanine + ATP = L-phenylalanyl-tRNA(Phe) + AMP + diphosphate + H(+). This is Phenylalanine--tRNA ligase alpha subunit from Geobacter sp. (strain M21).